Consider the following 136-residue polypeptide: MVRVARSVNARKKRRSILAAAKGYRGQRSRLYRKAKEQVLRSLVYAYRDRRKRKSSFRKLWIIRINAAARMEGVTYNRFLQGLKLANIELDRRSLAHLAVHNPDTFSALVGVAKDSLKNAPDPVAAPRLRGTSSRT.

This sequence belongs to the bacterial ribosomal protein bL20 family.

Its function is as follows. Binds directly to 23S ribosomal RNA and is necessary for the in vitro assembly process of the 50S ribosomal subunit. It is not involved in the protein synthesizing functions of that subunit. This is Large ribosomal subunit protein bL20 from Tropheryma whipplei (strain TW08/27) (Whipple's bacillus).